A 21-amino-acid chain; its full sequence is Thanatin (21 aa).

A disulfide bond links C11 and C18.

The protein resides in the secreted. Insect defense peptide with a broad spectrum of activity against Gram-positive and Gram-negative bacteria and fungi. No activity against S.aureus. Stops respiration in bacteria but does not permeabilize their inner membranes. In Podisus maculiventris (Spined soldier bug), this protein is Thanatin.